The chain runs to 1783 residues: Chitin synthase A (1783 aa).

Asn-159, Asn-637, Asn-652, Asn-664, and Asn-669 each carry an N-linked (GlcNAc...) asparagine glycan. The next 2 membrane-spanning stretches (helical) occupy residues 745–765 (IWVA…LSFV) and 781–801 (LTLV…IVAF). Residues Asn-1014 and Asn-1018 are each glycosylated (N-linked (GlcNAc...) asparagine). Residues 1051–1071 (IMLAMTIILCSVILVKFLAAL) form a helical membrane-spanning segment. Asn-1416 is a glycosylation site (N-linked (GlcNAc...) asparagine). The next 3 helical transmembrane spans lie at 1441-1461 (FVVF…IYLG), 1474-1494 (FPII…LIFI), and 1502-1522 (IGWM…LPIY). N-linked (GlcNAc...) asparagine glycosylation is found at Asn-1529 and Asn-1617. A disordered region spans residues 1659 to 1724 (THDINRGQTP…SFDFQRGNMQ (66 aa)). Polar residues predominate over residues 1664-1688 (RGQTPFQDFPSSRPSVSNLRGQANP). Asn-1695 carries N-linked (GlcNAc...) asparagine glycosylation. The region spanning 1725 to 1781 (GPDDSMIIEAIQGVLREVDLDTVTKKQVRALVEQRLQTGLVGERRTFMDRQIDNELA) is the DEK-C domain.

The protein belongs to the chitin synthase family. Class V subfamily.

Its subcellular location is the cell membrane. The enzyme catalyses [(1-&gt;4)-N-acetyl-beta-D-glucosaminyl](n) + UDP-N-acetyl-alpha-D-glucosamine = [(1-&gt;4)-N-acetyl-beta-D-glucosaminyl](n+1) + UDP + H(+). Polymerizes chitin, a structural polymer of the cell wall and septum, by transferring the sugar moiety of UDP-GlcNAc to the non-reducing end of the growing chitin polymer. Responsible for about 29% of the chitin in conidial walls, is essential for conidial wall strength in media with high water potential and contributes to strength of hyphal tips. This Colletotrichum graminicola (Maize anthracnose fungus) protein is Chitin synthase A.